We begin with the raw amino-acid sequence, 209 residues long: Outer-membrane lipoprotein carrier protein (209 aa).

The signal sequence occupies residues Met1–Ala21.

Belongs to the LolA family. Monomer.

The protein localises to the periplasm. Functionally, participates in the translocation of lipoproteins from the inner membrane to the outer membrane. Only forms a complex with a lipoprotein if the residue after the N-terminal Cys is not an aspartate (The Asp acts as a targeting signal to indicate that the lipoprotein should stay in the inner membrane). The polypeptide is Outer-membrane lipoprotein carrier protein (Xanthomonas axonopodis pv. citri (strain 306)).